The following is a 369-amino-acid chain: DNA replication and repair protein RecF (369 aa).

30–37 is an ATP binding site; that stretch reads GENAQGKT.

It belongs to the RecF family.

Its subcellular location is the cytoplasm. Functionally, the RecF protein is involved in DNA metabolism; it is required for DNA replication and normal SOS inducibility. RecF binds preferentially to single-stranded, linear DNA. It also seems to bind ATP. This Oceanobacillus iheyensis (strain DSM 14371 / CIP 107618 / JCM 11309 / KCTC 3954 / HTE831) protein is DNA replication and repair protein RecF.